We begin with the raw amino-acid sequence, 867 residues long: Cation/H(+) antiporter 23, chloroplastic (867 aa).

The next 12 membrane-spanning stretches (helical) occupy residues 43 to 63 (SGST…VANL), 75 to 95 (LYLP…PSVL), 112 to 132 (MVLE…LGLG), 146 to 166 (VIIA…LYYL), 175 to 195 (IISG…PDLA), 212 to 232 (AMCA…FGFA), 242 to 262 (KMMP…IFVI), 283 to 303 (HVWF…ACGV), 336 to 356 (GILM…GFML), 362 to 382 (FMMV…TVIT), 393 to 413 (AFAI…VLNA), and 427 to 447 (HMTI…AFAY). The disordered stretch occupies residues 848–867 (SMYEDEDEDDEEDHQYGIHR). Acidic residues predominate over residues 851 to 860 (EDEDEDDEED).

Belongs to the monovalent cation:proton antiporter 2 (CPA2) transporter (TC 2.A.37) family. CHX (TC 2.A.37.4) subfamily. Specifically expressed in flower buds and pollen. Expressed in leaves, roots and stems.

The protein resides in the plastid. Its subcellular location is the chloroplast membrane. It localises to the endoplasmic reticulum membrane. Functionally, operates as a K(+)/H(+) antiporter or Na(+)/H(+) antiporter of the chloroplast envelope that functions in pH homeostasis and chloroplast development. Monovalent cation transporter with a preference for Cs(+), K(+) and Rb(+) relative to Na(+) or Li(+). Required for pollen tube guidance, but not for normal pollen development. May also be involved in the development or function of the female gametophyte. The chain is Cation/H(+) antiporter 23, chloroplastic (CHX23) from Arabidopsis thaliana (Mouse-ear cress).